The following is a 273-amino-acid chain: DnaJ homolog subfamily C member 27 (273 aa).

A required for interaction with MAPK1 region spans residues 1–18 (MESNVPKRKEPLKSLRIK). Residues 23–30 (GNAEVGKS), 71–75 (DMAGH), and 134–137 (NKID) contribute to the GTP site. The J domain maps to 217–273 (DSWEMLGVRPGASREEVNKAYRKLAVLLHPDKCVAPGSEDAFKAVVNARTALLKNIK).

Belongs to the small GTPase superfamily. Rab family. Interacts directly with MAPK1 (wild-type and kinase-deficient forms). Interacts directly (in GTP-bound form) with MAP2K1 (wild-type and kinase-deficient forms).

It is found in the nucleus. Its function is as follows. GTPase which can activate the MEK/ERK pathway and induce cell transformation when overexpressed. May act as a nuclear scaffold for MAPK1, probably by association with MAPK1 nuclear export signal leading to enhanced ERK1/ERK2 signaling. The polypeptide is DnaJ homolog subfamily C member 27 (Dnajc27) (Rattus norvegicus (Rat)).